The following is a 482-amino-acid chain: Probable metalloreductase AIM14 (482 aa).

A run of 7 helical transmembrane segments spans residues 16 to 36, 50 to 70, 87 to 106, 123 to 143, 155 to 175, 182 to 202, and 205 to 225; these read VKYGYVVFLLSIVHIVVVATV, SLPWLPQIVIWAILLAILGVW, GRMAYCLLPFDILLAYKYWP, IIVVCSMIHGIGYFVKWFVEG, LLGVVVFAAAVVLLVVSVALF, LFYVSHNITIGMFVVLILFHA, and PVTLFVAICGLLLAILFFIKF. A Ferric oxidoreductase domain is found at 86 to 198; the sequence is FGRMAYCLLP…ITIGMFVVLI (113 aa). An FAD-binding FR-type domain is found at 225 to 348; the sequence is FQTYSATPVS…GGSGISLAIP (124 aa).

This sequence belongs to the ferric reductase (FRE) family. AIM14 subfamily.

It localises to the membrane. In terms of biological role, probable cell surface metalloreductase. May be involved in iron or copper homeostasis. This is Probable metalloreductase AIM14 (AIM14) from Meyerozyma guilliermondii (strain ATCC 6260 / CBS 566 / DSM 6381 / JCM 1539 / NBRC 10279 / NRRL Y-324) (Yeast).